Reading from the N-terminus, the 303-residue chain is Sulfotransferase 6B1 (303 aa).

65 to 70 lines the 3'-phosphoadenylyl sulfate pocket; sequence KCGSNW. The active-site Proton acceptor is the His-118. 3'-phosphoadenylyl sulfate-binding positions include Arg-140, Ser-148, Tyr-203, 237 to 242, and 259 to 261; these read STFLAM and RKG.

It belongs to the sulfotransferase 1 family. As to expression, expressed in brain, heart, kidney, thymus, lung, liver and testis.

The protein localises to the cytoplasm. It localises to the cytosol. The enzyme catalyses thyroxine + 3'-phosphoadenylyl sulfate = thyroxine sulfate + adenosine 3',5'-bisphosphate + H(+). In terms of biological role, sulfotransferase that utilizes 3'-phospho-5'-adenylyl sulfate (PAPS) as sulfonate donor to catalyze the sulfate conjugation of thyroxine. Involved in the metabolism of thyroxine. The polypeptide is Sulfotransferase 6B1 (Sult6b1) (Mus musculus (Mouse)).